Reading from the N-terminus, the 375-residue chain is Glutamate 5-kinase (375 aa).

Lysine 17 lines the ATP pocket. Substrate contacts are provided by serine 57, aspartate 144, and asparagine 158. 178 to 179 provides a ligand contact to ATP; sequence TD. The PUA domain maps to 284–360; it reads SGSIVVDTGA…NEIADILGYK (77 aa).

This sequence belongs to the glutamate 5-kinase family.

The protein localises to the cytoplasm. It catalyses the reaction L-glutamate + ATP = L-glutamyl 5-phosphate + ADP. Its pathway is amino-acid biosynthesis; L-proline biosynthesis; L-glutamate 5-semialdehyde from L-glutamate: step 1/2. In terms of biological role, catalyzes the transfer of a phosphate group to glutamate to form L-glutamate 5-phosphate. The polypeptide is Glutamate 5-kinase (Methanococcoides burtonii (strain DSM 6242 / NBRC 107633 / OCM 468 / ACE-M)).